Here is a 323-residue protein sequence, read N- to C-terminus: MKPENKIPVLTRLSDKMKAVVNFQQPGLPPWPADGDIETQRQYYLLERRFWNADAPSMTTRTCAVPTPYGDVTTRLYSPQPTSQATLYYLHGGGFILGNLDTHDRIMRLLARYTGCTVIGIDYSLSPQARYPQAIEETVAVCSYFSQHADEYSLNVEKIGFAGDSAGAMLALASALWLRDKHIRCGNVIAILLWYGLYGLQDSVSRRLFGGAWDGLTREDLDMYEKAYLRNDEDRESPWYCLFNNDLTRDVPPCFIASAEFDPLIDDSRLLHQTLQAHQQPCEYKMYPGTLHAFLHYSRMMTIADDALQDGARFFMARMKTPR.

The Involved in the stabilization of the negatively charged intermediate by the formation of the oxyanion hole motif lies at 91 to 93 (HGG). Active-site residues include Ser-165, Asp-262, and His-292.

Belongs to the 'GDXG' lipolytic enzyme family. In terms of assembly, homodimer. Interacts with MalT and MelA.

The protein localises to the cytoplasm. Functionally, displays esterase activity towards short chain fatty esters (acyl chain length of up to 8 carbons). Able to hydrolyze triacetylglycerol (triacetin) and tributyrylglycerol (tributyrin), but not trioleylglycerol (triolein) or cholesterol oleate. Negatively regulates MalT activity by antagonizing maltotriose binding. Inhibits MelA galactosidase activity. This Salmonella paratyphi A (strain AKU_12601) protein is Acetyl esterase.